The sequence spans 641 residues: MHAPQLRKPAAGEIPESPGVYRFWDAHDRVIYVGKAKNLRARLTSYFADPALLHPRTRAMVTAAARLDWVIVRTEVEALQLEYNWIKQYEPRFNIKYRDDKSYPYLAVTLAEPVPRLMVYRGKRKKGNRYFGPFAHAWAIRDTLDLLLRVFPARTCSAGVYRRAQRIGRPCLLGYIGKCSAPCVGWVSEEQHRQIVLDFCDVMGGRATEYLRRLEKDMRAAAAAEDFERAARLRDDAAALRLAIEKQTVVLPENTDADVIALADDDLEAAVHVFFVRDGRVRGQRGWVVEKVEALDTADLVQHFLAQLYGETGAESADVPREILVPVAPSDTETLERWLSSRRGGRVTIRVPQRGDKKALLETVAQNAAQALHLHKVRRAGDLTARGRALREIQEALNLPDAPLRIECYDVSTLQGTDVVASMVVFEDGLPRKSEYRRFALRGVGGGDVGAIHEVISRRFRRYLDERMQTDSPIDDGTGPDQPRVDAAAHHRKFSYPPSLVIVDGGAPQVAAAKKALDELGIDDVALAGLAKRLEEIWLPDREEPVILPRASEGLYLLQRLRDEAHRFAISYHRAKRSTSMTRSVLEGIPGIGETRRKAFLRHFGSVQRMRQATVAELAAVPGVGRRTAEVVFAALHGADQ.

Residues 16–95 form the GIY-YIG domain; the sequence is ESPGVYRFWD…IKQYEPRFNI (80 aa). Residues 208–243 enclose the UVR domain; sequence TEYLRRLEKDMRAAAAAEDFERAARLRDDAAALRLA.

Belongs to the UvrC family. Interacts with UvrB in an incision complex.

The protein resides in the cytoplasm. In terms of biological role, the UvrABC repair system catalyzes the recognition and processing of DNA lesions. UvrC both incises the 5' and 3' sides of the lesion. The N-terminal half is responsible for the 3' incision and the C-terminal half is responsible for the 5' incision. The chain is UvrABC system protein C from Acidothermus cellulolyticus (strain ATCC 43068 / DSM 8971 / 11B).